The following is a 400-amino-acid chain: Tryptophan--tRNA ligase, cytoplasmic (400 aa).

The 'HIGH' region signature appears at 95–104 (PSSGSLHFGH). Positions 281–285 (KMSAS) match the 'KMSKS' region motif.

Belongs to the class-I aminoacyl-tRNA synthetase family.

It is found in the cytoplasm. The catalysed reaction is tRNA(Trp) + L-tryptophan + ATP = L-tryptophyl-tRNA(Trp) + AMP + diphosphate + H(+). In Dictyostelium discoideum (Social amoeba), this protein is Tryptophan--tRNA ligase, cytoplasmic (trpS).